Here is a 276-residue protein sequence, read N- to C-terminus: NH(3)-dependent NAD(+) synthetase (276 aa).

ATP is bound at residue 43–50 (GISGGVDS). D49 contributes to the Mg(2+) binding site. R146 contributes to the deamido-NAD(+) binding site. Residue T166 coordinates ATP. A Mg(2+)-binding site is contributed by E171. K179 and D186 together coordinate deamido-NAD(+). ATP is bound by residues K195 and T217. 266-267 (HK) contacts deamido-NAD(+).

The protein belongs to the NAD synthetase family. In terms of assembly, homodimer.

The enzyme catalyses deamido-NAD(+) + NH4(+) + ATP = AMP + diphosphate + NAD(+) + H(+). Its pathway is cofactor biosynthesis; NAD(+) biosynthesis; NAD(+) from deamido-NAD(+) (ammonia route): step 1/1. Functionally, catalyzes the ATP-dependent amidation of deamido-NAD to form NAD. Uses ammonia as a nitrogen source. This is NH(3)-dependent NAD(+) synthetase from Aliivibrio fischeri (strain ATCC 700601 / ES114) (Vibrio fischeri).